The sequence spans 380 residues: Peroxisomal membrane protein PEX13 (380 aa).

Positions Met-1–Gly-30 are disordered. At Met-1–Lys-230 the chain is on the lumenal side. The segment covering Lys-12 to Gly-30 has biased composition (polar residues). Residues Pro-231–Ala-251 traverse the membrane as a helical segment. The Cytoplasmic segment spans residues His-252 to Thr-380. The SH3 domain maps to Thr-277–Arg-344.

The protein belongs to the peroxin-13 family. As to quaternary structure, interacts (via SH3 domain) with PEX14 (via SH3-binding motif); forming the PEX13-PEX14 docking complex.

It is found in the peroxisome membrane. Component of the PEX13-PEX14 docking complex, a translocon channel that specifically mediates the import of peroxisomal cargo proteins bound to PEX5 receptor. The PEX13-PEX14 docking complex forms a large import pore which can be opened to a diameter of about 9 nm. Mechanistically, PEX5 receptor along with cargo proteins associates with the PEX14 subunit of the PEX13-PEX14 docking complex in the cytosol, leading to the insertion of the receptor into the organelle membrane with the concomitant translocation of the cargo into the peroxisome matrix. The chain is Peroxisomal membrane protein PEX13 (PEX13) from Komagataella pastoris (Yeast).